Consider the following 140-residue polypeptide: ATP synthase epsilon chain (140 aa).

Belongs to the ATPase epsilon chain family. F-type ATPases have 2 components, CF(1) - the catalytic core - and CF(0) - the membrane proton channel. CF(1) has five subunits: alpha(3), beta(3), gamma(1), delta(1), epsilon(1). CF(0) has three main subunits: a, b and c.

The protein resides in the cell inner membrane. Produces ATP from ADP in the presence of a proton gradient across the membrane. The chain is ATP synthase epsilon chain from Colwellia maris.